The sequence spans 280 residues: Pantothenate synthetase (280 aa).

31-38 (MGNLHVGH) provides a ligand contact to ATP. Catalysis depends on histidine 38, which acts as the Proton donor. Residue glutamine 62 coordinates (R)-pantoate. Residue glutamine 62 coordinates beta-alanine. 150–153 (GKKD) contributes to the ATP binding site. (R)-pantoate is bound at residue glutamine 156. ATP-binding positions include valine 179 and 187–190 (MSSR).

This sequence belongs to the pantothenate synthetase family. As to quaternary structure, homodimer.

The protein resides in the cytoplasm. It catalyses the reaction (R)-pantoate + beta-alanine + ATP = (R)-pantothenate + AMP + diphosphate + H(+). It functions in the pathway cofactor biosynthesis; (R)-pantothenate biosynthesis; (R)-pantothenate from (R)-pantoate and beta-alanine: step 1/1. Catalyzes the condensation of pantoate with beta-alanine in an ATP-dependent reaction via a pantoyl-adenylate intermediate. This is Pantothenate synthetase from Xanthomonas oryzae pv. oryzae (strain KACC10331 / KXO85).